A 395-amino-acid chain; its full sequence is Protein hedgehog (395 aa).

The N-terminal stretch at 1–26 is a signal peptide; sequence MDNHSSVPWASAASVTCLSLDAKCHS. Over residues 26–43 the composition is skewed to low complexity; sequence SSSSSCSSKSTASSISAS. A disordered region spans residues 26–46; the sequence is SSSSSCSSKSTASSISASPET. A propeptide spanning residues 27–82 is cleaved from the precursor; that stretch reads SSSSCSSKSTASSISASPETQTMRHIAHTQRCLSRLTSLVALLLIVLPMMFSPAHS. Cysteine 83 carries the N-palmitoyl cysteine lipid modification. Residues glutamate 147, glutamate 148, aspartate 153, threonine 183, glutamate 184, aspartate 187, and aspartate 189 each contribute to the Ca(2+) site. Glycine 255 is lipidated: Cholesterol glycine ester.

It belongs to the hedgehog family. In terms of assembly, interacts with shf. The C-terminal part of the hedgehog protein precursor displays an autoproteolysis activity that results in the cleavage of the full-length protein into two parts (N-product and C-product). In addition, the C-terminal part displays a cholesterol transferase activity that results by the covalent attachment of a cholesterol moiety to the C-terminal of the newly generated N-product. The N-product is the active species in both local and long-range signaling, whereas the C-product has no signaling activity. In terms of processing, cholesterylation is required for N-product targeting to lipid rafts and multimerization. Post-translationally, N-palmitoylation by Rasp of the hedgehog N-product, within the secretory pathway, is required for the embryonic and larval patterning activities of the hedgehog signal.

It localises to the nucleus. Its subcellular location is the cytoplasm. It is found in the cell membrane. The catalysed reaction is glycyl-L-cysteinyl-[protein] + cholesterol + H(+) = [protein]-C-terminal glycyl cholesterol ester + N-terminal L-cysteinyl-[protein]. The C-terminal part of the hedgehog protein precursor displays an autoproteolysis activity that results in the cleavage of the full-length protein into two parts (N-product and C-product). In addition, the C-terminal part displays a cholesterol transferase activity that results by the covalent attachment of a cholesterol moiety to the C-terminal of the newly generated N-product. Once cleaved, the C-product has no signaling activity and diffuses from the cell. In terms of biological role, the dually lipidated hedgehog protein N-product is a morphogen which is essential for a variety of patterning events during development. Establishes the anterior-posterior axis of the embryonic segments and patterns the larval imaginal disks. Binds to the patched (ptc) receptor, which functions in association with smoothened (smo), to activate the transcription of target genes wingless (wg), decapentaplegic (dpp) and ptc. In the absence of hh, ptc represses the constitutive signaling activity of smo through fused (fu). Essential component of a signaling pathway which regulates the Duox-dependent gut immune response to bacterial uracil; required to activate Cad99C-dependent endosome formation, norpA-dependent Ca2+ mobilization and p38 MAPK, which are essential steps in the Duox-dependent production of reactive oxygen species (ROS) in response to intestinal bacterial infection. During photoreceptor differentiation, it up-regulates transcription of Ubr3, which in turn promotes the hh-signaling pathway by mediating the ubiquitination and degradation of cos. This chain is Protein hedgehog, found in Drosophila simulans (Fruit fly).